Here is a 1217-residue protein sequence, read N- to C-terminus: Inactive disease resistance protein RPS4 (1217 aa).

The 162-residue stretch at 14–175 folds into the TIR domain; it reads PQHQVFINFR…EIVKAVKTAL (162 aa). Glutamate 88 is a catalytic residue. An NB-ARC domain is found at 211–472; that stretch reads EQRLKDLEEK…FRSQDKDYVE (262 aa). 11 LRR repeats span residues 260–285, 436–459, 614–636, 637–659, 682–706, 708–728, 729–749, 750–774, 796–818, 819–842, and 861–887; these read HALIDQIRVKSKHLELDRLPQMLLGE, PNIVSVFQVSYDELTTAQKDAFLD, LKEVRCLHWLKFPLETLPNDFNP, INLVDLKLPYSEMEQLWEGDKDT, AEKLQRLNLEGCTTLKAFPHDMKKM, MLAFLNLKGCTSLESLPEMNL, ISLKTLTLSGCSTFKEFPLIS, DNIETLYLDGTAISQLPMNMEKLQR, LKALQELILSDCLNLKIFPEIDI, SFLNILLLDGTAIEVMPQLPSVQY, and LSQLKWLDLKYCTSLTSVPEFPPNLQC. A disordered region spans residues 1162 to 1195; it reads TEGVDGRVKKKKKTRMDNGRPKKKQRSGRDDNQT. Positions 1170 to 1177 match the Nuclear localization signal motif; that stretch reads KKKKKTRM.

Interacts with EDS1.

It is found in the nucleus. It carries out the reaction NAD(+) + H2O = ADP-D-ribose + nicotinamide + H(+). In Arabidopsis thaliana (Mouse-ear cress), this protein is Inactive disease resistance protein RPS4 (RPS4).